The sequence spans 540 residues: Phosphoenolpyruvate carboxykinase (ATP) (540 aa).

Arginine 65 serves as a coordination point for substrate. Residue lysine 87 is modified to N6-acetyllysine. Tyrosine 207 and lysine 213 together coordinate substrate. Residues lysine 213, histidine 232, and glycine 248 to threonine 256 each bind ATP. Positions 213 and 232 each coordinate Mn(2+). Aspartate 269 contributes to the Mn(2+) binding site. ATP is bound by residues glutamate 297, arginine 333, arginine 449–isoleucine 450, and threonine 455. Arginine 333 contacts substrate. Position 523 is an N6-acetyllysine (lysine 523).

This sequence belongs to the phosphoenolpyruvate carboxykinase (ATP) family. In terms of assembly, monomer. Mn(2+) serves as cofactor.

The protein resides in the cytoplasm. The catalysed reaction is oxaloacetate + ATP = phosphoenolpyruvate + ADP + CO2. It participates in carbohydrate biosynthesis; gluconeogenesis. Functionally, involved in the gluconeogenesis. Catalyzes the conversion of oxaloacetate (OAA) to phosphoenolpyruvate (PEP) through direct phosphoryl transfer between the nucleoside triphosphate and OAA. This Escherichia coli O7:K1 (strain IAI39 / ExPEC) protein is Phosphoenolpyruvate carboxykinase (ATP).